The following is a 222-amino-acid chain: MIF4G domain-containing protein (222 aa).

The MIF4G domain maps to 3-205; the sequence is EASRDEYKIQ…LEIIEFRAAG (203 aa).

The protein belongs to the MIF4GD family. In terms of assembly, interacts with EIF4G1, EIF4G2 and SLBP; probably tethered by SLBP to the 3'-end of mRNAs ending with the histone stem-loop, it also interacts with EIF4G1 which is bound to their 5'-end.

The protein localises to the cytoplasm. Its subcellular location is the nucleus. Its function is as follows. Functions in replication-dependent translation of histone mRNAs which differ from other eukaryotic mRNAs in that they do not end with a poly-A tail but a stem-loop. May participate in circularizing those mRNAs specifically enhancing their translation. The protein is MIF4G domain-containing protein (Mif4gd) of Rattus norvegicus (Rat).